The following is a 595-amino-acid chain: DNA ligase (595 aa).

NAD(+)-binding positions include 32-36, 81-82, and Glu-113; these read DEKYD and SL. Lys-115 (N6-AMP-lysine intermediate) is an active-site residue. The NAD(+) site is built by Arg-136, Glu-178, Lys-296, and Lys-320. Zn(2+)-binding residues include Cys-414, Cys-417, Cys-432, and Cys-438.

It belongs to the NAD-dependent DNA ligase family. LigA subfamily. Mg(2+) is required as a cofactor. It depends on Mn(2+) as a cofactor.

The catalysed reaction is NAD(+) + (deoxyribonucleotide)n-3'-hydroxyl + 5'-phospho-(deoxyribonucleotide)m = (deoxyribonucleotide)n+m + AMP + beta-nicotinamide D-nucleotide.. DNA ligase that catalyzes the formation of phosphodiester linkages between 5'-phosphoryl and 3'-hydroxyl groups in double-stranded DNA using NAD as a coenzyme and as the energy source for the reaction. It is essential for DNA replication and repair of damaged DNA. The chain is DNA ligase from Blochmanniella pennsylvanica (strain BPEN).